A 276-amino-acid chain; its full sequence is MTAVSTTATTVLQATQSDVLQEIQSNFLLNSSIWVNIALAGVVILLFVAMGRDLESPRAKLIWVATMLVPLVSISSYAGLASGLTVGFLQMPPGHALAGQEVLSPWGRYLTWTFSTPMILLALGLLADTDIASLFTAITMDIGMCVTGLAAALITSSHLLRWVFYGISCAFFVAVLYVLLVQWPADAEAAGTSEIFGTLKILTVVLWLGYPILWALGSEGVALLSVGVTSWGYSGLDILAKYVFAFLLLRWVAANEGTVSGSGMGIGSGGAAPADD.

Positions 1 to 21 (MTAVSTTATTVLQATQSDVLQ) are excised as a propeptide. The Extracellular segment spans residues 22–25 (EIQS). A helical membrane pass occupies residues 26–51 (NFLLNSSIWVNIALAGVVILLFVAMG). The Cytoplasmic portion of the chain corresponds to 52–57 (RDLESP). The chain crosses the membrane as a helical span at residues 58 to 81 (RAKLIWVATMLVPLVSISSYAGLA). Over 82-105 (SGLTVGFLQMPPGHALAGQEVLSP) the chain is Extracellular. Residues 106–127 (WGRYLTWTFSTPMILLALGLLA) traverse the membrane as a helical segment. The Cytoplasmic segment spans residues 128–130 (DTD). Residues 131-154 (IASLFTAITMDIGMCVTGLAAALI) traverse the membrane as a helical segment. Residues 155 to 157 (TSS) lie on the Extracellular side of the membrane. A helical membrane pass occupies residues 158-180 (HLLRWVFYGISCAFFVAVLYVLL). Topologically, residues 181 to 192 (VQWPADAEAAGT) are cytoplasmic. Residues 193–216 (SEIFGTLKILTVVLWLGYPILWAL) form a helical membrane-spanning segment. The Extracellular portion of the chain corresponds to 217–225 (GSEGVALLS). Residues 226-254 (VGVTSWGYSGLDILAKYVFAFLLLRWVAA) form a helical membrane-spanning segment. Lys-241 is subject to N6-(retinylidene)lysine. At 255–276 (NEGTVSGSGMGIGSGGAAPADD) the chain is on the cytoplasmic side.

The protein belongs to the archaeal/bacterial/fungal opsin family.

It is found in the cell membrane. In terms of biological role, light-driven anion pump. The protein is Halorhodopsin of Halobacterium halobium (strain shark).